A 138-amino-acid polypeptide reads, in one-letter code: Transcription antitermination protein NusB (138 aa).

It belongs to the NusB family.

Functionally, involved in transcription antitermination. Required for transcription of ribosomal RNA (rRNA) genes. Binds specifically to the boxA antiterminator sequence of the ribosomal RNA (rrn) operons. The sequence is that of Transcription antitermination protein NusB from Leptospira borgpetersenii serovar Hardjo-bovis (strain JB197).